The sequence spans 275 residues: Exosome complex component Rrp42 (275 aa).

Belongs to the RNase PH family. Rrp42 subfamily. As to quaternary structure, component of the archaeal exosome complex. Forms a hexameric ring-like arrangement composed of 3 Rrp41-Rrp42 heterodimers. The hexameric ring associates with a trimer of Rrp4 and/or Csl4 subunits.

It localises to the cytoplasm. Its function is as follows. Non-catalytic component of the exosome, which is a complex involved in RNA degradation. Contributes to the structuring of the Rrp41 active site. This is Exosome complex component Rrp42 from Saccharolobus islandicus (strain Y.N.15.51 / Yellowstone #2) (Sulfolobus islandicus).